The chain runs to 333 residues: Flotillin-like protein FloA (333 aa).

A helical transmembrane segment spans residues 10 to 30; the sequence is IFLIAGGIIFLVLFFHYVPFF.

It belongs to the flotillin-like FloA family. Homooligomerizes.

It is found in the cell membrane. Its subcellular location is the membrane raft. Its function is as follows. Found in functional membrane microdomains (FMM) that may be equivalent to eukaryotic membrane rafts. FMMs are highly dynamic and increase in number as cells age. Flotillins are thought to be important factors in membrane fluidity. This Bacteroides fragilis (strain ATCC 25285 / DSM 2151 / CCUG 4856 / JCM 11019 / LMG 10263 / NCTC 9343 / Onslow / VPI 2553 / EN-2) protein is Flotillin-like protein FloA.